The primary structure comprises 792 residues: Xaa-Pro dipeptidyl-peptidase (792 aa).

Catalysis depends on charge relay system residues Ser-363, Asp-482, and His-513.

It belongs to the peptidase S15 family. Homodimer.

Its subcellular location is the cytoplasm. The enzyme catalyses Hydrolyzes Xaa-Pro-|- bonds to release unblocked, N-terminal dipeptides from substrates including Ala-Pro-|-p-nitroanilide and (sequentially) Tyr-Pro-|-Phe-Pro-|-Gly-Pro-|-Ile.. Removes N-terminal dipeptides sequentially from polypeptides having unsubstituted N-termini provided that the penultimate residue is proline. This chain is Xaa-Pro dipeptidyl-peptidase, found in Lactobacillus delbrueckii subsp. bulgaricus (strain ATCC 11842 / DSM 20081 / BCRC 10696 / JCM 1002 / NBRC 13953 / NCIMB 11778 / NCTC 12712 / WDCM 00102 / Lb 14).